The primary structure comprises 218 residues: Large ribosomal subunit protein uL4 (218 aa).

The tract at residues 46–100 (ARQGTHSTKTRAEVRGGGRKPFRQKGTGRARQGSIRAPHFTGGGISHGPKPRDYA) is disordered. Residues 62–73 (GGRKPFRQKGTG) show a composition bias toward basic residues.

Belongs to the universal ribosomal protein uL4 family. In terms of assembly, part of the 50S ribosomal subunit.

Functionally, one of the primary rRNA binding proteins, this protein initially binds near the 5'-end of the 23S rRNA. It is important during the early stages of 50S assembly. It makes multiple contacts with different domains of the 23S rRNA in the assembled 50S subunit and ribosome. Forms part of the polypeptide exit tunnel. This is Large ribosomal subunit protein uL4 from Corynebacterium efficiens (strain DSM 44549 / YS-314 / AJ 12310 / JCM 11189 / NBRC 100395).